Consider the following 802-residue polypeptide: Oligophrenin-1 (802 aa).

In terms of domain architecture, PH spans 265–368 (QPTIEGYLYT…WMEAMDGKEP (104 aa)). Positions 380–564 (MELNEVGFKF…ILIEHFGKIY (185 aa)) constitute a Rho-GAP domain. Disordered regions lie at residues 641–663 (QKSGEMDPGRKSPSRPVSDCQTE) and 682–802 (TKAI…GDES). A compositionally biased stretch (basic and acidic residues) spans 716 to 732 (HHKEGDTDCFSKVRPPG). The span at 751 to 768 (SSTSQKPESKPETVSSNA) shows a compositional bias: polar residues.

In terms of assembly, interacts with HOMER1. Interacts with AMPA receptor complexes. Interacts with SH3GL2 (endophilin-A1). Interacts (via C-terminus) with NR1D1. As to expression, high expression in brain, particularly in the cerebellum, hippocampus, thalamus, frontal lobes, sensory cortex. Found in the myelin sheaths of peripheral nerves, chromaffin cells within the adrenal medulla, and in extra-adrenal chromaffin cells associated with celiac ganglia.

Its subcellular location is the postsynapse. It localises to the presynapse. The protein localises to the cell projection. The protein resides in the axon. It is found in the dendritic spine. Its subcellular location is the dendrite. It localises to the cytoplasm. In terms of biological role, stimulates GTP hydrolysis of members of the Rho family. Its action on RHOA activity and signaling is implicated in growth and stabilization of dendritic spines, and therefore in synaptic function, in hippocampal neurons. Critical for the stabilization of AMPA receptors at postsynaptic sites. Critical for the regulation of synaptic vesicle endocytosis at pre-synaptic terminals. Required for the localization of NR1D1 to dendrites, can suppress its repressor activity and protect it from proteasomal degradation. This is Oligophrenin-1 (Ophn1) from Rattus norvegicus (Rat).